Here is a 409-residue protein sequence, read N- to C-terminus: Major capsid protein (409 aa).

The protein belongs to the lambda phage major capsid protein family. As to quaternary structure, homomultimer. Interacts with the portal protein. Interacts with the decoration protein.

The protein localises to the virion. It is found in the host cytoplasm. In terms of biological role, assembles to form an icosahedric capsid shell with a T=7 symmetry although with a diameter of about 82 nm, which is a larger volume than the usual T=7 capsids. A dramatic reconfiguration of the capsid shell that expands the procaspid from a diameter of 66 nm to a supersized capsid of 82 nm, allows packaging of the large viral DNA genome. The capsid decoration protein binds the expanded capsid and stabilizes it. This is Major capsid protein from Thermus virus P23-45 (Thermus thermophilus phage P23-45).